Reading from the N-terminus, the 263-residue chain is Hydroxyethylthiazole kinase 1 (263 aa).

M42 lines the substrate pocket. ATP-binding residues include K118 and T164. G191 is a binding site for substrate.

It belongs to the Thz kinase family. Requires Mg(2+) as cofactor.

It catalyses the reaction 5-(2-hydroxyethyl)-4-methylthiazole + ATP = 4-methyl-5-(2-phosphooxyethyl)-thiazole + ADP + H(+). The protein operates within cofactor biosynthesis; thiamine diphosphate biosynthesis; 4-methyl-5-(2-phosphoethyl)-thiazole from 5-(2-hydroxyethyl)-4-methylthiazole: step 1/1. In terms of biological role, catalyzes the phosphorylation of the hydroxyl group of 4-methyl-5-beta-hydroxyethylthiazole (THZ). This chain is Hydroxyethylthiazole kinase 1, found in Clostridium botulinum (strain 657 / Type Ba4).